The chain runs to 479 residues: ATP-dependent RNA helicase DDX19B (479 aa).

Ala2 carries the N-acetylalanine modification. An N-terminal lobe region spans residues 2–300 (ATDSWALAVD…DPNVIKLKRE (299 aa)). The segment at 34–54 (TNGAVVKTNANAEKTDEEEKE) is disordered. Residues 55-68 (DRAAQSLLNKLIRS) are N-terminal helix. The short motif at 92–120 (KSFEELRLKPQLLQGVYAMGFNRPSKIQE) is the Q motif element. ATP contacts are provided by residues Gln119 and 138–145 (SQSGTGKT). Residues 125–295 (LMLAEPPQNL…QKVVPDPNVI (171 aa)) enclose the Helicase ATP-binding domain. Positions 242 to 245 (DEAD) match the DEAD box motif. A C-terminal lobe region spans residues 301 to 479 (EETLDTIKQY…DLDEIEKIAN (179 aa)). The 169-residue stretch at 306 to 474 (TIKQYYVLCS…RLDTDDLDEI (169 aa)) folds into the Helicase C-terminal domain. Residues Arg429 and Arg432 each contribute to the ATP site.

It belongs to the DEAD box helicase family. DDX19/DBP5 subfamily. Associates with the nuclear pore complex via interaction with NUP214. Interacts with NUP214 or RNA in a mutually exclusive manner.

The protein localises to the cytoplasm. Its subcellular location is the nucleus. The protein resides in the nucleoplasm. The enzyme catalyses ATP + H2O = ADP + phosphate + H(+). Functionally, ATP-dependent RNA helicase involved in mRNA export from the nucleus. Rather than unwinding RNA duplexes, DDX19B functions as a remodeler of ribonucleoprotein particles, whereby proteins bound to nuclear mRNA are dissociated and replaced by cytoplasmic mRNA binding proteins. This is ATP-dependent RNA helicase DDX19B (DDX19B) from Homo sapiens (Human).